Consider the following 146-residue polypeptide: 3-dehydroquinate dehydratase (146 aa).

Tyr24 serves as the catalytic Proton acceptor. Substrate contacts are provided by Asn73, His79, and Asp86. His99 functions as the Proton donor in the catalytic mechanism. Residues 100-101 (LS) and Arg110 contribute to the substrate site.

Belongs to the type-II 3-dehydroquinase family. As to quaternary structure, homododecamer.

It catalyses the reaction 3-dehydroquinate = 3-dehydroshikimate + H2O. The protein operates within metabolic intermediate biosynthesis; chorismate biosynthesis; chorismate from D-erythrose 4-phosphate and phosphoenolpyruvate: step 3/7. Its function is as follows. Catalyzes a trans-dehydration via an enolate intermediate. The sequence is that of 3-dehydroquinate dehydratase from Shewanella baltica (strain OS185).